The following is a 395-amino-acid chain: Elongation factor Tu (395 aa).

In terms of domain architecture, tr-type G spans 10–205 (KPHVNIGTIG…VDNWIPIPPR (196 aa)). Positions 19–26 (GHVDHGKT) are G1. 19–26 (GHVDHGKT) contacts GTP. A Mg(2+)-binding site is contributed by threonine 26. Residues 60-64 (GITIN) form a G2 region. Positions 81-84 (DCPG) are G3. Residues 81-85 (DCPGH) and 136-139 (NKVD) each bind GTP. The tract at residues 136-139 (NKVD) is G4. Residues 174-176 (SAL) form a G5 region.

It belongs to the TRAFAC class translation factor GTPase superfamily. Classic translation factor GTPase family. EF-Tu/EF-1A subfamily. In terms of assembly, monomer.

The protein localises to the cytoplasm. It carries out the reaction GTP + H2O = GDP + phosphate + H(+). Its function is as follows. GTP hydrolase that promotes the GTP-dependent binding of aminoacyl-tRNA to the A-site of ribosomes during protein biosynthesis. This Hymenobacter ocellatus (Parahymenobacter ocellatus) protein is Elongation factor Tu.